The sequence spans 226 residues: Ribosomal RNA large subunit methyltransferase E (226 aa).

Residues Gly-82, Trp-84, Asp-100, Asp-116, and Asp-140 each coordinate S-adenosyl-L-methionine. The active-site Proton acceptor is Lys-180.

The protein belongs to the class I-like SAM-binding methyltransferase superfamily. RNA methyltransferase RlmE family.

The protein localises to the cytoplasm. It carries out the reaction uridine(2552) in 23S rRNA + S-adenosyl-L-methionine = 2'-O-methyluridine(2552) in 23S rRNA + S-adenosyl-L-homocysteine + H(+). Functionally, specifically methylates the uridine in position 2552 of 23S rRNA at the 2'-O position of the ribose in the fully assembled 50S ribosomal subunit. The chain is Ribosomal RNA large subunit methyltransferase E from Caulobacter sp. (strain K31).